Here is a 325-residue protein sequence, read N- to C-terminus: Proto-oncogene Mas (325 aa).

Residues 1 to 36 (MDGSNVTSFVVEEPTNISTGRNASVGNAHRQIPIVH) are Extracellular-facing. N-linked (GlcNAc...) asparagine glycosylation is found at Asn-5, Asn-16, and Asn-22. The chain crosses the membrane as a helical span at residues 37–61 (WVIMSISPVGFVENGILLWFLCFRM). The Cytoplasmic portion of the chain corresponds to 62–65 (RRNP). Residues 66 to 86 (FTVYITHLSIADISLLFCIFI) form a helical membrane-spanning segment. Topologically, residues 87 to 104 (LSIDYALDYELSSGHYYT) are extracellular. Residues 105-128 (IVTLSVTFLFGYNTGLYLLTAISV) form a helical membrane-spanning segment. At 129–149 (ERCLSVLYPIWYRCHRPKYQS) the chain is on the cytoplasmic side. A helical membrane pass occupies residues 150–172 (ALVCALLWALSCLVTTMEYVMCI). The Extracellular segment spans residues 173–185 (DREEESHSRNDCR). The helical transmembrane segment at 186–206 (AVIIFIAILSFLVFTPLMLVS) threads the bilayer. At 207 to 224 (STILVVKIRKNTWASHSS) the chain is on the cytoplasmic side. The helical transmembrane segment at 225 to 245 (KLYIVIMVTIIIFLIFAMPMR) threads the bilayer. Residues 246-263 (LLYLLYYEYWSTFGNLHH) lie on the Extracellular side of the membrane. Residues 264-284 (ISLLFSTINSSANPFIYFFVG) form a helical membrane-spanning segment. The Cytoplasmic segment spans residues 285 to 325 (SSKKKRFKESLKVVLTRAFKDEMQPRRQKDNCNTVTVETVV).

The protein belongs to the G-protein coupled receptor 1 family. Interacts with AGTR1. Interacts with FLNA (via filamin repeat 21); increases PKA-mediated phosphorylation of FLNA.

The protein localises to the cell membrane. Its function is as follows. Receptor for angiotensin 1-7. Acts specifically as a functional antagonist of AGTR1 (angiotensin-2 type 1 receptor), although it up-regulates AGTR1 receptor levels. Positive regulation of AGTR1 levels occurs through activation of the G-proteins GNA11 and GNAQ, and stimulation of the protein kinase C signaling cascade. The antagonist effect on AGTR1 function is probably due to AGTR1 being physically altered by MAS1. In Homo sapiens (Human), this protein is Proto-oncogene Mas (MAS1).